Reading from the N-terminus, the 452-residue chain is Bifunctional protein GlmU (452 aa).

The interval 1 to 232 is pyrophosphorylase; the sequence is MTGRSCLTIV…EDEVRGINTK (232 aa). UDP-N-acetyl-alpha-D-glucosamine contacts are provided by residues 11–14, lysine 25, glutamine 78, and 83–84; these read LAAG and GT. Residue aspartate 108 participates in Mg(2+) binding. 4 residues coordinate UDP-N-acetyl-alpha-D-glucosamine: glycine 144, glutamate 158, asparagine 173, and asparagine 230. Asparagine 230 is a Mg(2+) binding site. Positions 233–253 are linker; the sequence is AQLAEAEQVMQARLRKEALDA. Residues 254–452 are N-acetyltransferase; that stretch reads GVTMVAPDTV…KLLAKKPKTG (199 aa). Residues arginine 319 and lysine 337 each coordinate UDP-N-acetyl-alpha-D-glucosamine. Histidine 349 serves as the catalytic Proton acceptor. UDP-N-acetyl-alpha-D-glucosamine-binding residues include tyrosine 352 and asparagine 363. Residues alanine 366, 372–373, serine 391, serine 409, and arginine 426 contribute to the acetyl-CoA site; that span reads NY.

This sequence in the N-terminal section; belongs to the N-acetylglucosamine-1-phosphate uridyltransferase family. The protein in the C-terminal section; belongs to the transferase hexapeptide repeat family. As to quaternary structure, homotrimer. Mg(2+) is required as a cofactor.

It is found in the cytoplasm. The enzyme catalyses alpha-D-glucosamine 1-phosphate + acetyl-CoA = N-acetyl-alpha-D-glucosamine 1-phosphate + CoA + H(+). It carries out the reaction N-acetyl-alpha-D-glucosamine 1-phosphate + UTP + H(+) = UDP-N-acetyl-alpha-D-glucosamine + diphosphate. Its pathway is nucleotide-sugar biosynthesis; UDP-N-acetyl-alpha-D-glucosamine biosynthesis; N-acetyl-alpha-D-glucosamine 1-phosphate from alpha-D-glucosamine 6-phosphate (route II): step 2/2. It participates in nucleotide-sugar biosynthesis; UDP-N-acetyl-alpha-D-glucosamine biosynthesis; UDP-N-acetyl-alpha-D-glucosamine from N-acetyl-alpha-D-glucosamine 1-phosphate: step 1/1. It functions in the pathway bacterial outer membrane biogenesis; LPS lipid A biosynthesis. Functionally, catalyzes the last two sequential reactions in the de novo biosynthetic pathway for UDP-N-acetylglucosamine (UDP-GlcNAc). The C-terminal domain catalyzes the transfer of acetyl group from acetyl coenzyme A to glucosamine-1-phosphate (GlcN-1-P) to produce N-acetylglucosamine-1-phosphate (GlcNAc-1-P), which is converted into UDP-GlcNAc by the transfer of uridine 5-monophosphate (from uridine 5-triphosphate), a reaction catalyzed by the N-terminal domain. The protein is Bifunctional protein GlmU of Nitrobacter hamburgensis (strain DSM 10229 / NCIMB 13809 / X14).